Here is a 101-residue protein sequence, read N- to C-terminus: RNA-binding protein Hfq (101 aa).

The 60-residue stretch at 9–68 (DPFLNALRRERVPVSIYLVNGIKLQGQVESFDQFVILLKNTVSQMVYKHAISTVVPSRPV) folds into the Sm domain. Residues 63–101 (VPSRPVSHHSNTPSGSTNNYHGSNPSAPQQPQQDSDDAE) form a disordered region. Positions 70–86 (HHSNTPSGSTNNYHGSN) are enriched in polar residues.

This sequence belongs to the Hfq family. Homohexamer.

In terms of biological role, RNA chaperone that binds small regulatory RNA (sRNAs) and mRNAs to facilitate mRNA translational regulation in response to envelope stress, environmental stress and changes in metabolite concentrations. Also binds with high specificity to tRNAs. The polypeptide is RNA-binding protein Hfq (Yersinia pseudotuberculosis serotype O:1b (strain IP 31758)).